We begin with the raw amino-acid sequence, 71 residues long: Beta-defensin 124 (71 aa).

The N-terminal stretch at 1 to 22 is a signal peptide; the sequence is MTQLLLFLVALLVLGHVPSGRS. 3 disulfides stabilise this stretch: Cys27–Cys54, Cys34–Cys48, and Cys38–Cys55.

The protein belongs to the beta-defensin family.

It localises to the secreted. Its function is as follows. Has antibacterial activity. The chain is Beta-defensin 124 (DEFB124) from Homo sapiens (Human).